A 477-amino-acid chain; its full sequence is Glycogen synthase (477 aa).

Residue lysine 15 coordinates ADP-alpha-D-glucose.

This sequence belongs to the glycosyltransferase 1 family. Bacterial/plant glycogen synthase subfamily.

The catalysed reaction is [(1-&gt;4)-alpha-D-glucosyl](n) + ADP-alpha-D-glucose = [(1-&gt;4)-alpha-D-glucosyl](n+1) + ADP + H(+). It participates in glycan biosynthesis; glycogen biosynthesis. Synthesizes alpha-1,4-glucan chains using ADP-glucose. The polypeptide is Glycogen synthase (Cronobacter sakazakii (strain ATCC BAA-894) (Enterobacter sakazakii)).